The sequence spans 246 residues: Carboxy-S-adenosyl-L-methionine synthase (246 aa).

Residues Y39, 64 to 66 (GCS), 89 to 90 (DN), 121 to 122 (DI), N136, and R203 contribute to the S-adenosyl-L-methionine site.

This sequence belongs to the class I-like SAM-binding methyltransferase superfamily. Cx-SAM synthase family. In terms of assembly, homodimer.

It catalyses the reaction prephenate + S-adenosyl-L-methionine = carboxy-S-adenosyl-L-methionine + 3-phenylpyruvate + H2O. Catalyzes the conversion of S-adenosyl-L-methionine (SAM) to carboxy-S-adenosyl-L-methionine (Cx-SAM). The polypeptide is Carboxy-S-adenosyl-L-methionine synthase (Pseudomonas aeruginosa (strain UCBPP-PA14)).